Here is a 231-residue protein sequence, read N- to C-terminus: Ribose-5-phosphate isomerase A (231 aa).

Residues 40–43 (TGST), 93–96 (DGAD), and 106–109 (KGGG) contribute to the substrate site. The Proton acceptor role is filled by E115. Residue K133 coordinates substrate.

The protein belongs to the ribose 5-phosphate isomerase family. As to quaternary structure, homodimer.

The catalysed reaction is aldehydo-D-ribose 5-phosphate = D-ribulose 5-phosphate. Its pathway is carbohydrate degradation; pentose phosphate pathway; D-ribose 5-phosphate from D-ribulose 5-phosphate (non-oxidative stage): step 1/1. Catalyzes the reversible conversion of ribose-5-phosphate to ribulose 5-phosphate. This chain is Ribose-5-phosphate isomerase A, found in Escherichia coli O6:K15:H31 (strain 536 / UPEC).